The following is a 274-amino-acid chain: Acetyl-coenzyme A carboxylase carboxyl transferase subunit alpha (274 aa).

In terms of domain architecture, CoA carboxyltransferase C-terminal spans 1–245 (MENSQELTPW…RENLKKAIEG (245 aa)).

The protein belongs to the AccA family. In terms of assembly, acetyl-CoA carboxylase is a heterohexamer composed of biotin carboxyl carrier protein (AccB), biotin carboxylase (AccC) and two subunits each of ACCase subunit alpha (AccA) and ACCase subunit beta (AccD).

The protein resides in the cytoplasm. It carries out the reaction N(6)-carboxybiotinyl-L-lysyl-[protein] + acetyl-CoA = N(6)-biotinyl-L-lysyl-[protein] + malonyl-CoA. Its pathway is lipid metabolism; malonyl-CoA biosynthesis; malonyl-CoA from acetyl-CoA: step 1/1. Component of the acetyl coenzyme A carboxylase (ACC) complex. First, biotin carboxylase catalyzes the carboxylation of biotin on its carrier protein (BCCP) and then the CO(2) group is transferred by the carboxyltransferase to acetyl-CoA to form malonyl-CoA. This Clostridium acetobutylicum (strain ATCC 824 / DSM 792 / JCM 1419 / IAM 19013 / LMG 5710 / NBRC 13948 / NRRL B-527 / VKM B-1787 / 2291 / W) protein is Acetyl-coenzyme A carboxylase carboxyl transferase subunit alpha.